Here is a 245-residue protein sequence, read N- to C-terminus: 1-(5-phosphoribosyl)-5-[(5-phosphoribosylamino)methylideneamino] imidazole-4-carboxamide isomerase (245 aa).

Catalysis depends on Asp11, which acts as the Proton acceptor. The active-site Proton donor is the Asp132.

This sequence belongs to the HisA/HisF family.

The protein localises to the cytoplasm. It carries out the reaction 1-(5-phospho-beta-D-ribosyl)-5-[(5-phospho-beta-D-ribosylamino)methylideneamino]imidazole-4-carboxamide = 5-[(5-phospho-1-deoxy-D-ribulos-1-ylimino)methylamino]-1-(5-phospho-beta-D-ribosyl)imidazole-4-carboxamide. It participates in amino-acid biosynthesis; L-histidine biosynthesis; L-histidine from 5-phospho-alpha-D-ribose 1-diphosphate: step 4/9. The sequence is that of 1-(5-phosphoribosyl)-5-[(5-phosphoribosylamino)methylideneamino] imidazole-4-carboxamide isomerase from Geobacillus kaustophilus (strain HTA426).